The sequence spans 140 residues: Histone H3-like protein (140 aa).

Positions Met1–Pro36 are disordered. N6,N6,N6-trimethyllysine; alternate is present on Lys5. Lys5 is subject to N6,N6-dimethyllysine; alternate. 2 positions are modified to N6-methyllysine; alternate: Lys5 and Lys10. N6-acetyllysine; alternate occurs at positions 10, 15, 19, and 24. Residue Lys15 is modified to N6,N6-dimethyllysine; alternate. 2 positions are modified to N6-methyllysine; alternate: Lys19 and Lys24. An N6-acetyllysine mark is found at Lys56 and Lys64.

This sequence belongs to the histone H3 family. The nucleosome is a histone octamer containing two molecules each of H2A, H2B, H3 and H4 assembled in one H3-H4 heterotetramer and two H2A-H2B heterodimers. The octamer wraps approximately 147 bp of DNA. Mono-, di- and trimethylated to form H3K4me1/2/3. H3K4me activates gene expression by regulating transcription elongation and plays a role in telomere length maintenance. H3K4me enrichment correlates with transcription levels, and occurs in a 5' to 3' gradient with H3K4me3 enrichment at the 5'-end of genes, shifting to H3K4me2 and then H3K4me1. In terms of processing, acetylation of histone H3 leads to transcriptional activation.

The protein localises to the nucleus. It is found in the chromosome. Its function is as follows. Core component of nucleosome. Nucleosomes wrap and compact DNA into chromatin, limiting DNA accessibility to the cellular machineries which require DNA as a template. Histones thereby play a central role in transcription regulation, DNA repair, DNA replication and chromosomal stability. DNA accessibility is regulated via a complex set of post-translational modifications of histones, also called histone code, and nucleosome remodeling. The polypeptide is Histone H3-like protein (Encephalitozoon cuniculi (strain GB-M1) (Microsporidian parasite)).